The chain runs to 324 residues: Acetaldehyde dehydrogenase 1 (324 aa).

18 to 21 (SGNI) provides a ligand contact to NAD(+). The active-site Acyl-thioester intermediate is the Cys136. Residues 167 to 175 (SAGPGTRAN) and Asn297 each bind NAD(+).

Belongs to the acetaldehyde dehydrogenase family.

It carries out the reaction acetaldehyde + NAD(+) + CoA = acetyl-CoA + NADH + H(+). In Parafrankia sp. (strain EAN1pec), this protein is Acetaldehyde dehydrogenase 1.